Here is a 309-residue protein sequence, read N- to C-terminus: Tagatose-6-phosphate kinase (309 aa).

This sequence belongs to the carbohydrate kinase PfkB family. LacC subfamily.

The enzyme catalyses D-tagatofuranose 6-phosphate + ATP = D-tagatofuranose 1,6-bisphosphate + ADP + H(+). Its pathway is carbohydrate metabolism; D-tagatose 6-phosphate degradation; D-glyceraldehyde 3-phosphate and glycerone phosphate from D-tagatose 6-phosphate: step 1/2. The sequence is that of Tagatose-6-phosphate kinase from Streptococcus pneumoniae (strain 70585).